Here is a 748-residue protein sequence, read N- to C-terminus: Histone-lysine N-methyltransferase EZH2 (748 aa).

The span at 183-199 (DYEDDEDGEDNQDDERD) shows a compositional bias: acidic residues. Disordered stretches follow at residues 183 to 215 (DYED…KETL) and 347 to 428 (TPPK…NIEP). The segment covering 200 to 215 (DITKDQDDNMEEKETL) has biased composition (basic and acidic residues). A compositionally biased stretch (basic residues) spans 348–359 (PPKRPSGRRRGR). A compositionally biased stretch (basic and acidic residues) spans 376–387 (EAKDTDSDREAG). One can recognise a CXC domain in the interval 505–607 (CRKIQLKKDG…SKNVSCKNCS (103 aa)). The SET domain occupies 614–729 (KHLLLAPSDV…TGEELFFDYR (116 aa)).

This sequence belongs to the class V-like SAM-binding methyltransferase superfamily. Histone-lysine methyltransferase family. EZ subfamily. Component of the prc2/eed-ezh2 complex.

It is found in the nucleus. It carries out the reaction L-lysyl(27)-[histone H3] + 3 S-adenosyl-L-methionine = N(6),N(6),N(6)-trimethyl-L-lysyl(27)-[histone H3] + 3 S-adenosyl-L-homocysteine + 3 H(+). Polycomb group (PcG) protein. Catalytic subunit of the prc2/eed-ezh2 complex, which methylates 'Lys-9' and 'Lys-27' of histone H3, leading to transcriptional repression of the affected target gene. May regulate the circadian clock via histone methylation at the promoter of the circadian genes. The sequence is that of Histone-lysine N-methyltransferase EZH2 (ezh2-b) from Xenopus laevis (African clawed frog).